The chain runs to 793 residues: E3 ubiquitin-protein ligase UHRF1 (793 aa).

The region spanning 1–78 (MWIQVRTMDG…IQLLVRQSLV (78 aa)) is the Ubiquitin-like domain. 4 positions are modified to phosphoserine: serine 76, serine 91, serine 95, and serine 165. Residues 82 to 124 (STKERDSELSDTDSGCCLGQSESDKSSTHGEAAAETDSRPADE) are disordered. Tudor-like regions lie at residues 133 to 209 (GLYK…ARAR) and 216 to 283 (DLEV…IERP). Lysine 279 is covalently cross-linked (Glycyl lysine isopeptide (Lys-Gly) (interchain with G-Cter in SUMO2)). At serine 287 the chain carries Phosphoserine. The linker stretch occupies residues 296–301 (RKSGPS). Serine 298 bears the Phosphoserine; by PKA mark. Residues 310 to 366 (NRLCRVCACHLCGGRQDPDKQLMCDECDMAFHIYCLDPPLSSVPSEDEWYCPECRND) form a PHD-type zinc finger. Histone H3R2me0 binding stretches follow at residues 333–337 (CDECD) and 353–355 (PSE). Serine 368 carries the phosphoserine modification. Lysine 385 participates in a covalent cross-link: Glycyl lysine isopeptide (Lys-Gly) (interchain with G-Cter in SUMO2). Lysine 399 is modified (N6-acetyllysine). The YDG domain maps to 419-582 (GPIPGIPVGT…FLVWRYLLRR (164 aa)). The tract at residues 445–446 (HV) is required to promote base flipping. Residues 463–464 (AG) and aspartate 469 each bind DNA. Required for formation of a 5-methylcytosine-binding pocket regions lie at residues 466–469 (YEDD) and 478–481 (YTGS). Lysine 546 is modified (N6-acetyllysine; alternate). Lysine 546 is covalently cross-linked (Glycyl lysine isopeptide (Lys-Gly) (interchain with G-Cter in SUMO2); alternate). The span at 618 to 629 (REREKENSKREE) shows a compositional bias: basic and acidic residues. A disordered region spans residues 618–673 (REREKENSKREEEEQQEGGFASPRTGKGKWKRKSAGGGPSRAGSPRRTSKKTKVEP). Serine 639 carries the post-translational modification Phosphoserine; by CDK1. Serine 651 carries the post-translational modification Phosphoserine. A Glycyl lysine isopeptide (Lys-Gly) (interchain with G-Cter in SUMO2) cross-link involves residue lysine 670. A phosphoserine mark is found at serine 707 and serine 709. The RING-type zinc-finger motif lies at 724 to 763 (CICCQELVFRPITTVCQHNVCKDCLDRSFRAQVFSCPACR).

Interacts with DNMT3A and DNMT3B. Interacts with DNMT1; the interaction is direct. Interacts with USP7; leading to its deubiquitination. Interacts with histone H3. Interacts with HDAC1, but not with HDAC2. Interacts with BLTP3A. Interacts with PML. Interacts with EHMT2. Binds hemimethylated CpG containing oligonucleotides. Interacts with ZNF263; recruited to the SIX3 promoter along with other proteins involved in chromatin modification and transcriptional corepression where it contributes to transcriptional repression. Interacts with UHRF2. Interacts with FANCD2. Interacts with TET1 isoform 2; this interaction induces the recruitment of TET1 isoform 2 to replicating heterochromatin. In terms of processing, phosphorylation at Ser-298 of the linker region decreases the binding to H3K9me3. Phosphorylation at Ser-639 by CDK1 during M phase impairs interaction with USP7, preventing deubiquitination and leading to degradation by the proteasome. Post-translationally, ubiquitinated; which leads to proteasomal degradation. Autoubiquitinated; interaction with USP7 leads to deubiquitination and prevents degradation. Ubiquitination and degradation takes place during M phase, when phosphorylation at Ser-639 prevents interaction with USP7 and subsequent deubiquitination. Polyubiquitination may be stimulated by DNA damage. As to expression, expressed in thymus, bone marrow, testis, lung and heart. Overexpressed in breast cancer.

It is found in the nucleus. The catalysed reaction is S-ubiquitinyl-[E2 ubiquitin-conjugating enzyme]-L-cysteine + [acceptor protein]-L-lysine = [E2 ubiquitin-conjugating enzyme]-L-cysteine + N(6)-ubiquitinyl-[acceptor protein]-L-lysine.. It participates in protein modification; protein ubiquitination. In terms of biological role, multidomain protein that acts as a key epigenetic regulator by bridging DNA methylation and chromatin modification. Specifically recognizes and binds hemimethylated DNA at replication forks via its YDG domain and recruits DNMT1 methyltransferase to ensure faithful propagation of the DNA methylation patterns through DNA replication. In addition to its role in maintenance of DNA methylation, also plays a key role in chromatin modification: through its tudor-like regions and PHD-type zinc fingers, specifically recognizes and binds histone H3 trimethylated at 'Lys-9' (H3K9me3) and unmethylated at 'Arg-2' (H3R2me0), respectively, and recruits chromatin proteins. Enriched in pericentric heterochromatin where it recruits different chromatin modifiers required for this chromatin replication. Also localizes to euchromatic regions where it negatively regulates transcription possibly by impacting DNA methylation and histone modifications. Has E3 ubiquitin-protein ligase activity by mediating the ubiquitination of target proteins such as histone H3 and PML. It is still unclear how E3 ubiquitin-protein ligase activity is related to its role in chromatin in vivo. Plays a role in DNA repair by cooperating with UHRF2 to ensure recruitment of FANCD2 to interstrand cross-links (ICLs) leading to FANCD2 activation. Acts as a critical player of proper spindle architecture by catalyzing the 'Lys-63'-linked ubiquitination of KIF11, thereby controlling KIF11 localization on the spindle. This Homo sapiens (Human) protein is E3 ubiquitin-protein ligase UHRF1 (UHRF1).